Here is a 393-residue protein sequence, read N- to C-terminus: Methylthioribose kinase (393 aa).

Residues N38, K53, and 107–109 (EDL) contribute to the ATP site. D225 is a substrate binding site. 242 to 244 (DPE) contacts ATP. R332 is a substrate binding site.

This sequence belongs to the methylthioribose kinase family. Homodimer.

The enzyme catalyses 5-(methylsulfanyl)-D-ribose + ATP = 5-(methylsulfanyl)-alpha-D-ribose 1-phosphate + ADP + H(+). It functions in the pathway amino-acid biosynthesis; L-methionine biosynthesis via salvage pathway; S-methyl-5-thio-alpha-D-ribose 1-phosphate from S-methyl-5'-thioadenosine (hydrolase route): step 2/2. In terms of biological role, catalyzes the phosphorylation of methylthioribose into methylthioribose-1-phosphate. In Bacillus cereus (strain 03BB102), this protein is Methylthioribose kinase.